Here is a 310-residue protein sequence, read N- to C-terminus: Prephenate dehydratase (310 aa).

The 188-residue stretch at 3–190 (RIAYLGPEGT…ARTRFVLVGL (188 aa)) folds into the Prephenate dehydratase domain. Residues 204 to 281 (AVVLRLVNEP…VDVRYLGSWP (78 aa)) form the ACT domain.

In terms of assembly, homodimer.

It carries out the reaction prephenate + H(+) = 3-phenylpyruvate + CO2 + H2O. It participates in amino-acid biosynthesis; L-phenylalanine biosynthesis; phenylpyruvate from prephenate: step 1/1. The protein is Prephenate dehydratase (pheA) of Mycolicibacterium smegmatis (strain ATCC 700084 / mc(2)155) (Mycobacterium smegmatis).